Reading from the N-terminus, the 206-residue chain is Shieldin complex subunit 1 (206 aa).

Polar residues-rich tracts occupy residues 1–15 (MATQ…TEES), 33–43 (RPSQQTNSEAF), and 60–69 (DSSNLNTEQN). Disordered regions lie at residues 1 to 21 (MATQ…LDLP) and 33 to 69 (RPSQ…TEQN).

As to quaternary structure, component of the shieldin complex, consisting of SHLD1, SHLD2, SHLD3 and MAD2L2/REV7. Within the complex, SHLD2 forms a scaffold which interacts with a SHLD3-MAD2L2 subcomplex via its N-terminus, and with SHLD1 via its C-terminus. Interacts with ASTE1.

The protein localises to the chromosome. Component of the shieldin complex, which plays an important role in repair of DNA double-stranded breaks (DSBs). During G1 and S phase of the cell cycle, the complex functions downstream of TP53BP1 to promote non-homologous end joining (NHEJ) and suppress DNA end resection. Mediates various NHEJ-dependent processes including immunoglobulin class-switch recombination, and fusion of unprotected telomeres. This Bos taurus (Bovine) protein is Shieldin complex subunit 1.